The sequence spans 297 residues: Counting factor 45-1 (297 aa).

A signal peptide spans 1 to 20 (MNKLISLLLVCLVAIALVNA). In terms of domain architecture, Ch-type lysozyme spans 24–235 (IDFDSDTVNS…SASTGSGSGS (212 aa)). Catalysis depends on residues D29, D119, and E121. Residue N166 is glycosylated (N-linked (GlcNAc...) asparagine). The interval 231 to 296 (SGSGSSSGSS…GSSSGSGSGS (66 aa)) is S-G-S motif repeats. The tract at residues 231–297 (SGSGSSSGSS…SSSGSGSGSS (67 aa)) is disordered. The segment covering 234-275 (GSSSGSSSGSSSGSSSGSGSSSGSGSSSGSSSGSGSGSSSSG) has biased composition (low complexity). A compositionally biased stretch (gly residues) spans 276 to 297 (SGSGSGSSSGSGSSSGSGSGSS).

This sequence belongs to the glycosyl hydrolase 25 family. In terms of assembly, monomer. Component of the counting factor (CF) complex, which includes cf60, cf50, cf45-1 and ctnA.

It localises to the secreted. Functionally, cell-counting factor that limits the maximum size of the multicellular structure during aggregation. This Dictyostelium discoideum (Social amoeba) protein is Counting factor 45-1 (cf45-1).